The primary structure comprises 179 residues: Large ribosomal subunit protein uL6 (179 aa).

It belongs to the universal ribosomal protein uL6 family. As to quaternary structure, part of the 50S ribosomal subunit.

This protein binds to the 23S rRNA, and is important in its secondary structure. It is located near the subunit interface in the base of the L7/L12 stalk, and near the tRNA binding site of the peptidyltransferase center. This chain is Large ribosomal subunit protein uL6, found in Clostridium acetobutylicum (strain ATCC 824 / DSM 792 / JCM 1419 / IAM 19013 / LMG 5710 / NBRC 13948 / NRRL B-527 / VKM B-1787 / 2291 / W).